The primary structure comprises 798 residues: Penicillin-binding protein 1A (798 aa).

At 1-9 (MIKKILTTC) the chain is on the cytoplasmic side. A helical; Signal-anchor for type II membrane protein transmembrane segment spans residues 10–30 (FGLVFGFCVFGVGLVAIAILV). Residues 31–798 (TYPKLPSLDS…SKQQQLDSLF (768 aa)) are Periplasmic-facing. The segment at 50-218 (LTIYSADGEV…SAYNPIVNPE (169 aa)) is transglycosylase. The Proton donor; for transglycosylase activity role is filled by E88. Positions 378 to 700 (RRALGFAARA…GTIAVPVWVD (323 aa)) are transpeptidase. S461 serves as the catalytic Acyl-ester intermediate; for transpeptidase activity. The segment at 738–798 (GLTLDNSGIA…SKQQQLDSLF (61 aa)) is disordered. The span at 768-777 (AADDEVRQDM) shows a compositional bias: basic and acidic residues. Residues 783–798 (LPSNTGSKQQQLDSLF) show a composition bias toward polar residues.

This sequence in the N-terminal section; belongs to the glycosyltransferase 51 family. The protein in the C-terminal section; belongs to the transpeptidase family.

It localises to the cell inner membrane. It carries out the reaction [GlcNAc-(1-&gt;4)-Mur2Ac(oyl-L-Ala-gamma-D-Glu-L-Lys-D-Ala-D-Ala)](n)-di-trans,octa-cis-undecaprenyl diphosphate + beta-D-GlcNAc-(1-&gt;4)-Mur2Ac(oyl-L-Ala-gamma-D-Glu-L-Lys-D-Ala-D-Ala)-di-trans,octa-cis-undecaprenyl diphosphate = [GlcNAc-(1-&gt;4)-Mur2Ac(oyl-L-Ala-gamma-D-Glu-L-Lys-D-Ala-D-Ala)](n+1)-di-trans,octa-cis-undecaprenyl diphosphate + di-trans,octa-cis-undecaprenyl diphosphate + H(+). It catalyses the reaction Preferential cleavage: (Ac)2-L-Lys-D-Ala-|-D-Ala. Also transpeptidation of peptidyl-alanyl moieties that are N-acyl substituents of D-alanine.. It functions in the pathway cell wall biogenesis; peptidoglycan biosynthesis. Functionally, cell wall formation. Synthesis of cross-linked peptidoglycan from the lipid intermediates. The enzyme has a penicillin-insensitive transglycosylase N-terminal domain (formation of linear glycan strands) and a penicillin-sensitive transpeptidase C-terminal domain (cross-linking of the peptide subunits). This is Penicillin-binding protein 1A (mrcA) from Neisseria meningitidis serogroup A / serotype 4A (strain DSM 15465 / Z2491).